The primary structure comprises 40 residues: Alpha-conotoxin-like Qc1.1c (40 aa).

A propeptide spanning residues 1–19 (SDGRNTAANDKASNLMALR) is cleaved from the precursor. Disulfide bonds link Cys22–Cys28 and Cys23–Cys36. The tract at residues 24 to 26 (PNP) is lacks the Ser-Xaa-Pro motif that is crucial for potent interaction with nAChR.

Belongs to the conotoxin A superfamily. In terms of tissue distribution, expressed by the venom duct.

It localises to the secreted. Alpha-conotoxins act on postsynaptic membranes, they bind to the nicotinic acetylcholine receptors (nAChR) and thus inhibit them. Has possibly a distinct nAChR binding mode from other alpha-conotoxins, due to a different three residue motif (lacks the Ser-Xaa-Pro motif). The polypeptide is Alpha-conotoxin-like Qc1.1c (Conus quercinus (Oak cone)).